Reading from the N-terminus, the 408-residue chain is (R)-2-hydroxyisocaproyl-CoA dehydratase alpha subunit (408 aa).

Glutamate 55 is a substrate binding site. [4Fe-4S] cluster-binding residues include cysteine 84, cysteine 117, and cysteine 346.

This sequence belongs to the FldB/FldC dehydratase alpha/beta subunit family. In terms of assembly, part of the heterodimeric complex HadBC composed of (R)-2-hydroxyisocaproyl-CoA dehydratase alpha (HadB) and beta (HadC) subunit. [4Fe-4S] cluster is required as a cofactor.

The enzyme catalyses (R)-2-hydroxy-4-methylpentanoyl-CoA = 4-methylpent-2-enoyl-CoA + H2O. Activated by HadI. Functionally, involved in the reductive branch of L-leucine fermentation. Catalyzes the irreversible beta/alpha-elimination of water from (R)-2-hydroxyisocaproyl-CoA to yield isocaprenoyl-CoA. This beta/alpha-dehydration depends on the reductive formation of ketyl radicals on the substrate generated by injection of a single electron from the ATP-dependent activator protein HadI. The enzyme is specific for the R-isomer. In Clostridioides difficile (Peptoclostridium difficile), this protein is (R)-2-hydroxyisocaproyl-CoA dehydratase alpha subunit.